The following is a 576-amino-acid chain: Protein HYPER-SENSITIVITY-RELATED 4 (576 aa).

The chain crosses the membrane as a helical span at residues 55-75 (LATAKTVLTTAASVAATAMLA). 306 to 313 (GPPGTGKS) is an ATP binding site. A disordered region spans residues 508-532 (DKAKTEKQELENKKKTKEGTDSVVK).

It belongs to the AAA ATPase family. BCS1 subfamily. In terms of assembly, binds to the Yariv phenylglycoside (beta-D-Glc)(3). Mg(2+) is required as a cofactor.

The protein resides in the membrane. It catalyses the reaction ATP + H2O = ADP + phosphate + H(+). This is Protein HYPER-SENSITIVITY-RELATED 4 from Arabidopsis thaliana (Mouse-ear cress).